The primary structure comprises 494 residues: UPF0164 protein TP_0859/TP_0860 (494 aa).

The first 44 residues, M1–A44, serve as a signal peptide directing secretion.

The protein belongs to the UPF0164 family.

The sequence is that of UPF0164 protein TP_0859/TP_0860 from Treponema pallidum (strain Nichols).